A 302-amino-acid chain; its full sequence is RNA polymerase sigma factor RpoH (302 aa).

The tract at residues 57-126 is sigma-70 factor domain-2; it reads LVTSHLRLVA…IQEYILRSWS (70 aa). The short motif at 81–84 is the Interaction with polymerase core subunit RpoC element; that stretch reads ELIS. Positions 235-286 are sigma-70 factor domain-4; the sequence is AMDKLNDREKHILTERRLSDNPKTLEELSQVYGVSRERVRQIEVRAFDKLQK. The segment at residues 259–278 is a DNA-binding region (H-T-H motif); it reads LEELSQVYGVSRERVRQIEV.

This sequence belongs to the sigma-70 factor family. RpoH subfamily. As to quaternary structure, interacts with the RNA polymerase core enzyme.

It localises to the cytoplasm. Its function is as follows. Sigma factors are initiation factors that promote the attachment of RNA polymerase to specific initiation sites and are then released. This sigma factor is involved in regulation of expression of heat shock genes. The protein is RNA polymerase sigma factor RpoH of Zymomonas mobilis subsp. mobilis (strain ATCC 31821 / ZM4 / CP4).